Here is a 484-residue protein sequence, read N- to C-terminus: Transcription factor TGAL4 (484 aa).

Residues 1 to 11 are compositionally biased toward polar residues; that stretch reads MGEASSSSGHP. Disordered regions lie at residues 1-22, 84-137, and 155-181; these read MGEA…GYGF, ATAA…NASS, and QQEQ…DPKT. A compositionally biased stretch (low complexity) spans 123-137; that stretch reads SESSSKNNSNQNASS. A compositionally biased stretch (polar residues) spans 163 to 173; the sequence is ATNSPTHSSKT. A bZIP domain is found at 178-222; the sequence is DPKTMRRLAQNREAARKSRLRKKAYIQQLESSKLKLAQMEQDIHR. The tract at residues 180–200 is basic motif; sequence KTMRRLAQNREAARKSRLRKK. The leucine-zipper stretch occupies residues 206–220; it reads LESSKLKLAQMEQDI. The 215-residue stretch at 241–455 folds into the DOG1 domain; sequence AAMFDVDYAR…RALSSLWASR (215 aa).

The protein belongs to the bZIP family. As to quaternary structure, interacts with NPR1/NH1 and NPR3/NH3.

The protein localises to the nucleus. In terms of biological role, transcriptional regulator involved in defense response. In Oryza sativa subsp. japonica (Rice), this protein is Transcription factor TGAL4.